Consider the following 584-residue polypeptide: 2-succinyl-5-enolpyruvyl-6-hydroxy-3-cyclohexene-1-carboxylate synthase (584 aa).

It belongs to the TPP enzyme family. MenD subfamily. Homodimer. It depends on Mg(2+) as a cofactor. Requires Mn(2+) as cofactor. Thiamine diphosphate is required as a cofactor.

The enzyme catalyses isochorismate + 2-oxoglutarate + H(+) = 5-enolpyruvoyl-6-hydroxy-2-succinyl-cyclohex-3-ene-1-carboxylate + CO2. Its pathway is quinol/quinone metabolism; 1,4-dihydroxy-2-naphthoate biosynthesis; 1,4-dihydroxy-2-naphthoate from chorismate: step 2/7. The protein operates within quinol/quinone metabolism; menaquinone biosynthesis. Catalyzes the thiamine diphosphate-dependent decarboxylation of 2-oxoglutarate and the subsequent addition of the resulting succinic semialdehyde-thiamine pyrophosphate anion to isochorismate to yield 2-succinyl-5-enolpyruvyl-6-hydroxy-3-cyclohexene-1-carboxylate (SEPHCHC). This Bacillus cytotoxicus (strain DSM 22905 / CIP 110041 / 391-98 / NVH 391-98) protein is 2-succinyl-5-enolpyruvyl-6-hydroxy-3-cyclohexene-1-carboxylate synthase.